The primary structure comprises 162 residues: Phosphopantetheine adenylyltransferase (162 aa).

T9 serves as a coordination point for substrate. ATP contacts are provided by residues 9-10 (TF) and H17. Residues K41, L77, and R91 each coordinate substrate. ATP contacts are provided by residues 92 to 94 (GLR), E102, and 127 to 133 (RQAIASK).

Belongs to the bacterial CoaD family. In terms of assembly, homohexamer. Requires Mg(2+) as cofactor.

It is found in the cytoplasm. The catalysed reaction is (R)-4'-phosphopantetheine + ATP + H(+) = 3'-dephospho-CoA + diphosphate. The protein operates within cofactor biosynthesis; coenzyme A biosynthesis; CoA from (R)-pantothenate: step 4/5. In terms of biological role, reversibly transfers an adenylyl group from ATP to 4'-phosphopantetheine, yielding dephospho-CoA (dPCoA) and pyrophosphate. This is Phosphopantetheine adenylyltransferase from Cereibacter sphaeroides (strain ATCC 17025 / ATH 2.4.3) (Rhodobacter sphaeroides).